The chain runs to 455 residues: Nuclear mRNA export protein THP1 (455 aa).

In terms of domain architecture, PCI spans 220–431; sequence IEYRYLLGRY…QLCVVKKTTM (212 aa).

As to quaternary structure, heterodimer with THP1. The SAC3-THP1 complex interacts with CDC31 and SUS1, and with the mRNA export factor MEX67-MTR2, the TREX complex component SUB2, and the nucleoporin NUP1.

It is found in the nucleus envelope. Its function is as follows. Component of the SAC3-THP1 complex, which functions in transcription-coupled mRNA export from the nucleus to the cytoplasm. SAC3-THP1 functions in docking export-competent ribonucleoprotein particles (mRNPs) to the nuclear entrance of the nuclear pore complex (nuclear basket), by association with components of the nuclear mRNA export machinery (MEX67-MTR2 and SUB2) in the nucleoplasm and the nucleoporin NUP1 at the nuclear basket. THP1 binds to RNA in vitro. The polypeptide is Nuclear mRNA export protein THP1 (THP1) (Saccharomyces cerevisiae (strain ATCC 204508 / S288c) (Baker's yeast)).